A 1327-amino-acid polypeptide reads, in one-letter code: uncharacterized protein (1327 aa).

Substrate is bound at residue 884–885 (WD). Residue Glu-1023 is the Proton donor of the active site. 1143-1144 (KQ) lines the substrate pocket.

The protein in the N-terminal section; belongs to the trehalose phosphatase family. In the C-terminal section; belongs to the glycosyl hydrolase 65 family.

This is an uncharacterized protein from Mycobacterium tuberculosis (strain CDC 1551 / Oshkosh).